We begin with the raw amino-acid sequence, 148 residues long: Deoxyuridine 5'-triphosphate nucleotidohydrolase (148 aa).

Residues 68-70 (RSG), asparagine 81, 85-87 (TID), and lysine 95 contribute to the substrate site.

The protein belongs to the dUTPase family. The cofactor is Mg(2+).

The catalysed reaction is dUTP + H2O = dUMP + diphosphate + H(+). It participates in pyrimidine metabolism; dUMP biosynthesis; dUMP from dCTP (dUTP route): step 2/2. This enzyme is involved in nucleotide metabolism: it produces dUMP, the immediate precursor of thymidine nucleotides and it decreases the intracellular concentration of dUTP so that uracil cannot be incorporated into DNA. This Rickettsia felis (strain ATCC VR-1525 / URRWXCal2) (Rickettsia azadi) protein is Deoxyuridine 5'-triphosphate nucleotidohydrolase.